A 737-amino-acid polypeptide reads, in one-letter code: Probable serine/threonine-protein kinase DDB_G0269628 (737 aa).

A Protein kinase domain is found at 8–488 (YKLIKDLRSG…TLQKMDTSLL (481 aa)). ATP-binding positions include 14-22 (LRSGGEGKA) and K36. Disordered regions lie at residues 155–251 (NTIQ…KKCS) and 278–298 (TTAATTTTTTNTTHSSSSSSN). Residues 156 to 167 (TIQHSHSSSSLV) are compositionally biased toward polar residues. A compositionally biased stretch (low complexity) spans 168 to 229 (NGTTSPTNAT…PSSPSSPLSP (62 aa)). Residue D349 is the Proton acceptor of the active site.

Belongs to the protein kinase superfamily. NEK Ser/Thr protein kinase family. NIMA subfamily.

The enzyme catalyses L-seryl-[protein] + ATP = O-phospho-L-seryl-[protein] + ADP + H(+). It catalyses the reaction L-threonyl-[protein] + ATP = O-phospho-L-threonyl-[protein] + ADP + H(+). The sequence is that of Probable serine/threonine-protein kinase DDB_G0269628 from Dictyostelium discoideum (Social amoeba).